A 355-amino-acid polypeptide reads, in one-letter code: uncharacterized protein (355 aa).

It belongs to the TmcAL family.

This is an uncharacterized protein from Methanocaldococcus jannaschii (strain ATCC 43067 / DSM 2661 / JAL-1 / JCM 10045 / NBRC 100440) (Methanococcus jannaschii).